We begin with the raw amino-acid sequence, 210 residues long: Prohead protease (210 aa).

The propeptide occupies 1-23 (MTQAAIDYNKLKSAPVHLDAYIK). Residues His76, Ser122, and Glu148 contribute to the active site. Positions 167-210 (SMNGHDYTEWRKSFTAISSKAVPAQERNLSELEKLAIALGYVKE) are excised as a propeptide.

This sequence belongs to the HK97 prohead protease protein family. Post-translationally, cleaves itself autocatalytically to yield the mature form of the protease.

It is found in the virion. Functionally, serine protease involved in capsid assembly and maturation. Cleaves the major capsid protein, the decoration protein, the portal protein to yield mature procapsids competent for DNA packaging. Acts as a trigger for assembly of the capsid protein. The protein is Prohead protease of Escherichia coli (Enterobacteria phage T5).